Reading from the N-terminus, the 446-residue chain is Phosphoglucosamine mutase (446 aa).

Catalysis depends on Ser100, which acts as the Phosphoserine intermediate. The Mg(2+) site is built by Ser100, Asp241, Asp243, and Asp245. Ser100 bears the Phosphoserine mark.

The protein belongs to the phosphohexose mutase family. Requires Mg(2+) as cofactor. Post-translationally, activated by phosphorylation.

It carries out the reaction alpha-D-glucosamine 1-phosphate = D-glucosamine 6-phosphate. In terms of biological role, catalyzes the conversion of glucosamine-6-phosphate to glucosamine-1-phosphate. This is Phosphoglucosamine mutase from Methylorubrum extorquens (strain CM4 / NCIMB 13688) (Methylobacterium extorquens).